Here is a 1054-residue protein sequence, read N- to C-terminus: NACHT, LRR and PYD domains-containing protein 12 (1054 aa).

One can recognise a Pyrin domain in the interval 1–95 (MLPSTARDGL…WERGQGEDLV (95 aa)). In terms of domain architecture, FISNA spans 129-201 (YKDYVRRKFQ…SPIQMETLFE (73 aa)). Positions 211–528 (HTVVLQGAAG…EFFAAMYCAL (318 aa)) constitute an NACHT domain. Residue 217–224 (GAAGMGKS) coordinates ATP. 8 LRR repeats span residues 821-841 (YLVE…KLLC), 850-871 (RLRT…DLAS), 878-899 (SLLE…LLCE), 907-928 (KLQT…GIAS), 935-955 (CLQE…QLLG), 964-985 (RLQK…DLSS), 992-1013 (TLHE…LLCK), and 1021-1042 (KLRV…RMAA).

It belongs to the NLRP family. As to quaternary structure, interacts (via pyrin domain) with ASC. Interacts (via pyrin domain) with FAF1 (via UBA domain). Interacts with MAP3K14; this interaction promotes proteasomal degradation of MAP3K14. Interacts with NOD2; this interaction promotes degradation of NOD2 through the ubiquitin-proteasome pathway. Interacts with HSPA1A and HSPA8. Interacts with HSP90AA1. Interacts with TRIM25; this interaction inhibits RIGI-mediated signaling pathway. In terms of tissue distribution, mainly expressed in dendritic cells (DCs) and neutrophils.

It is found in the cytoplasm. Functionally, plays an essential role as an potent mitigator of inflammation. Primarily expressed in dendritic cells and macrophages, inhibits both canonical and non-canonical NF-kappa-B and ERK activation pathways. Functions as a negative regulator of NOD2 by targeting it to degradation via the proteasome pathway. In turn, promotes bacterial tolerance. Also inhibits the RIGI-mediated immune signaling against RNA viruses by reducing the E3 ubiquitin ligase TRIM25-mediated 'Lys-63'-linked RIGI activation but enhancing the E3 ubiquitin ligase RNF125-mediated 'Lys-48'-linked RIGI degradation. Also acts as a negative regulator of inflammatory response to mitigate obesity and obesity-associated diseases in adipose tissue. The polypeptide is NACHT, LRR and PYD domains-containing protein 12 (Nlrp12) (Mus musculus (Mouse)).